A 255-amino-acid chain; its full sequence is Triosephosphate isomerase (255 aa).

A substrate-binding site is contributed by 9–11 (NWK). His-95 (electrophile) is an active-site residue. The active-site Proton acceptor is Glu-167. Residues Gly-173, Ser-212, and 233–234 (GG) contribute to the substrate site.

This sequence belongs to the triosephosphate isomerase family. Homodimer.

The protein localises to the cytoplasm. It carries out the reaction D-glyceraldehyde 3-phosphate = dihydroxyacetone phosphate. The protein operates within carbohydrate biosynthesis; gluconeogenesis. Its pathway is carbohydrate degradation; glycolysis; D-glyceraldehyde 3-phosphate from glycerone phosphate: step 1/1. Involved in the gluconeogenesis. Catalyzes stereospecifically the conversion of dihydroxyacetone phosphate (DHAP) to D-glyceraldehyde-3-phosphate (G3P). In Escherichia fergusonii (strain ATCC 35469 / DSM 13698 / CCUG 18766 / IAM 14443 / JCM 21226 / LMG 7866 / NBRC 102419 / NCTC 12128 / CDC 0568-73), this protein is Triosephosphate isomerase.